The primary structure comprises 467 residues: Retinoic acid receptor RXR-gamma (467 aa).

A modulating region spans residues 1-142 (MYGNYPHFIK…TSPGSLAKHI (142 aa)). 2 consecutive NR C4-type zinc fingers follow at residues 143–163 (CAIC…CEGC) and 179–203 (CRDN…YQKC). A DNA-binding region (nuclear receptor) is located at residues 143-208 (CAICGDRSSG…RYQKCLAMGM (66 aa)). Residues 209–232 (KREAVQEERQGSRERSENEAESTS) form a hinge region. The span at 214-226 (QEERQGSRERSEN) shows a compositional bias: basic and acidic residues. A disordered region spans residues 214-237 (QEERQGSRERSENEAESTSGGSED). The 229-residue stretch at 235–463 (SEDMPVERIL…TFLMEMLETP (229 aa)) folds into the NR LBD domain.

It belongs to the nuclear hormone receptor family. NR2 subfamily. Homodimer. Heterodimer; with a RAR molecule. Binds DNA preferentially as a RAR/RXR heterodimer. As to expression, isoform 1 is highly expressed inliver. Isoform 2 is abundantly expressed in eye and dorsal root ganglia.

The protein resides in the nucleus. Functionally, receptor for retinoic acid. Retinoic acid receptors bind as heterodimers to their target response elements in response to their ligands, all-trans or 9-cis retinoic acid, and regulate gene expression in various biological processes. The RAR/RXR heterodimers bind to the retinoic acid response elements (RARE) composed of tandem 5'-AGGTCA-3' sites known as DR1-DR5. The high affinity ligand for RXRs is 9-cis retinoic acid. The sequence is that of Retinoic acid receptor RXR-gamma (RXRG) from Gallus gallus (Chicken).